Here is a 141-residue protein sequence, read N- to C-terminus: Large ribosomal subunit protein uL11 (141 aa).

This sequence belongs to the universal ribosomal protein uL11 family. As to quaternary structure, part of the ribosomal stalk of the 50S ribosomal subunit. Interacts with L10 and the large rRNA to form the base of the stalk. L10 forms an elongated spine to which L12 dimers bind in a sequential fashion forming a multimeric L10(L12)X complex. One or more lysine residues are methylated.

Functionally, forms part of the ribosomal stalk which helps the ribosome interact with GTP-bound translation factors. This is Large ribosomal subunit protein uL11 from Cyanothece sp. (strain PCC 7425 / ATCC 29141).